The sequence spans 236 residues: Ribonuclease HII (236 aa).

The RNase H type-2 domain occupies 27-219 (RILCGVDEAG…VRRALDGAPP (193 aa)). 3 residues coordinate a divalent metal cation: aspartate 33, glutamate 34, and aspartate 128. The tract at residues 212–236 (RALDGAPPPAGDAVPQTDAKTAWAD) is disordered.

This sequence belongs to the RNase HII family. It depends on Mn(2+) as a cofactor. Mg(2+) is required as a cofactor.

It is found in the cytoplasm. The enzyme catalyses Endonucleolytic cleavage to 5'-phosphomonoester.. Functionally, endonuclease that specifically degrades the RNA of RNA-DNA hybrids. The chain is Ribonuclease HII from Ralstonia nicotianae (strain ATCC BAA-1114 / GMI1000) (Ralstonia solanacearum).